The sequence spans 122 residues: Immunoglobulin lambda variable 4-3 (122 aa).

The N-terminal stretch at 1–19 is a signal peptide; it reads MAWVSFYLLPFIFSTGLCA. Residues 20-44 form a framework-1 region; the sequence is LPVLTQPPSASALLGASIKLTCTLS. One can recognise an Ig-like domain in the interval 21 to 122; the sequence is PVLTQPPSAS…ESHTIDGQVG (102 aa). Cysteines 41 and 111 form a disulfide. The segment at 45–51 is complementarity-determining-1; that stretch reads SEHSTYT. A framework-2 region spans residues 52 to 68; it reads IEWYQQRPGRSPQYIMK. The segment at 69-75 is complementarity-determining-2; sequence VKSDGSH. The tract at residues 76 to 111 is framework-3; that stretch reads SKGDGIPDRFMGSSSGADRYLTFSNLQSDDEAEYHC. Residues 112 to 122 form a complementarity-determining-3 region; that stretch reads GESHTIDGQVG.

Immunoglobulins are composed of two identical heavy chains and two identical light chains; disulfide-linked.

The protein localises to the secreted. The protein resides in the cell membrane. Its function is as follows. V region of the variable domain of immunoglobulin light chains that participates in the antigen recognition. Immunoglobulins, also known as antibodies, are membrane-bound or secreted glycoproteins produced by B lymphocytes. In the recognition phase of humoral immunity, the membrane-bound immunoglobulins serve as receptors which, upon binding of a specific antigen, trigger the clonal expansion and differentiation of B lymphocytes into immunoglobulins-secreting plasma cells. Secreted immunoglobulins mediate the effector phase of humoral immunity, which results in the elimination of bound antigens. The antigen binding site is formed by the variable domain of one heavy chain, together with that of its associated light chain. Thus, each immunoglobulin has two antigen binding sites with remarkable affinity for a particular antigen. The variable domains are assembled by a process called V-(D)-J rearrangement and can then be subjected to somatic hypermutations which, after exposure to antigen and selection, allow affinity maturation for a particular antigen. The sequence is that of Immunoglobulin lambda variable 4-3 from Homo sapiens (Human).